Here is a 147-residue protein sequence, read N- to C-terminus: Nucleoside diphosphate kinase (147 aa).

ATP is bound by residues K9, F57, R85, T91, R102, and N112. H115 functions as the Pros-phosphohistidine intermediate in the catalytic mechanism.

This sequence belongs to the NDK family. In terms of assembly, homotetramer. The cofactor is Mg(2+).

The protein localises to the cytoplasm. It catalyses the reaction a 2'-deoxyribonucleoside 5'-diphosphate + ATP = a 2'-deoxyribonucleoside 5'-triphosphate + ADP. It carries out the reaction a ribonucleoside 5'-diphosphate + ATP = a ribonucleoside 5'-triphosphate + ADP. Its function is as follows. Major role in the synthesis of nucleoside triphosphates other than ATP. The ATP gamma phosphate is transferred to the NDP beta phosphate via a ping-pong mechanism, using a phosphorylated active-site intermediate. The sequence is that of Nucleoside diphosphate kinase from Listeria monocytogenes serotype 4b (strain CLIP80459).